The primary structure comprises 415 residues: UDP-N-acetylglucosamine 1-carboxyvinyltransferase (415 aa).

Residue 22–23 (KN) participates in phosphoenolpyruvate binding. Arg-92 contributes to the UDP-N-acetyl-alpha-D-glucosamine binding site. Cys-116 serves as the catalytic Proton donor. Cys-116 is subject to 2-(S-cysteinyl)pyruvic acid O-phosphothioketal. Residues 121–125 (RPIDL), Asp-304, and Val-326 contribute to the UDP-N-acetyl-alpha-D-glucosamine site.

Belongs to the EPSP synthase family. MurA subfamily.

Its subcellular location is the cytoplasm. It catalyses the reaction phosphoenolpyruvate + UDP-N-acetyl-alpha-D-glucosamine = UDP-N-acetyl-3-O-(1-carboxyvinyl)-alpha-D-glucosamine + phosphate. The protein operates within cell wall biogenesis; peptidoglycan biosynthesis. Functionally, cell wall formation. Adds enolpyruvyl to UDP-N-acetylglucosamine. The polypeptide is UDP-N-acetylglucosamine 1-carboxyvinyltransferase (Halothermothrix orenii (strain H 168 / OCM 544 / DSM 9562)).